Reading from the N-terminus, the 469-residue chain is Glutamate--tRNA ligase (469 aa).

The 'HIGH' region signature appears at 11 to 21; sequence PSPTGFIHLGN. Positions 118–131 are enriched in basic and acidic residues; sequence GEKPRYDGTWRPEP. A disordered region spans residues 118-139; that stretch reads GEKPRYDGTWRPEPGKVLPEPP. The 'KMSKS' region motif lies at 243-247; it reads KMSKR. Lys-246 is a binding site for ATP.

The protein belongs to the class-I aminoacyl-tRNA synthetase family. Glutamate--tRNA ligase type 1 subfamily. In terms of assembly, monomer.

The protein localises to the cytoplasm. It carries out the reaction tRNA(Glu) + L-glutamate + ATP = L-glutamyl-tRNA(Glu) + AMP + diphosphate. In terms of biological role, catalyzes the attachment of glutamate to tRNA(Glu) in a two-step reaction: glutamate is first activated by ATP to form Glu-AMP and then transferred to the acceptor end of tRNA(Glu). This chain is Glutamate--tRNA ligase, found in Burkholderia pseudomallei (strain 1106a).